The sequence spans 427 residues: 3-phosphoshikimate 1-carboxyvinyltransferase (427 aa).

The 3-phosphoshikimate site is built by Lys-20, Ser-21, and Arg-25. A phosphoenolpyruvate-binding site is contributed by Lys-20. Phosphoenolpyruvate-binding residues include Gly-92 and Arg-120. 4 residues coordinate 3-phosphoshikimate: Ser-166, Gln-168, Asp-312, and Lys-339. Gln-168 contacts phosphoenolpyruvate. The active-site Proton acceptor is Asp-312. Phosphoenolpyruvate is bound by residues Arg-343 and Arg-385.

This sequence belongs to the EPSP synthase family. Monomer.

The protein localises to the cytoplasm. It catalyses the reaction 3-phosphoshikimate + phosphoenolpyruvate = 5-O-(1-carboxyvinyl)-3-phosphoshikimate + phosphate. The protein operates within metabolic intermediate biosynthesis; chorismate biosynthesis; chorismate from D-erythrose 4-phosphate and phosphoenolpyruvate: step 6/7. Functionally, catalyzes the transfer of the enolpyruvyl moiety of phosphoenolpyruvate (PEP) to the 5-hydroxyl of shikimate-3-phosphate (S3P) to produce enolpyruvyl shikimate-3-phosphate and inorganic phosphate. This Streptococcus sanguinis (strain SK36) protein is 3-phosphoshikimate 1-carboxyvinyltransferase.